Consider the following 94-residue polypeptide: MASLHDVARLAGVSKSTVSRVINDEYGVKEATKQKVRQAVAECGYVPNQVAKDLKEESSAIIVQDKTGKVLFVKEGALEQDEIAKVIELIKQNI.

The region spanning 1-56 (MASLHDVARLAGVSKSTVSRVINDEYGVKEATKQKVRQAVAECGYVPNQVAKDLKE) is the HTH lacI-type domain. A DNA-binding region (H-T-H motif) is located at residues 4 to 23 (LHDVARLAGVSKSTVSRVIN).

Functionally, repressor for the scr operon. Binds D-fructose as an inducer. The sequence is that of Sucrose operon repressor (scrR) from Vibrio alginolyticus.